The sequence spans 244 residues: 7-cyano-7-deazaguanine synthase (244 aa).

Residue 14 to 24 coordinates ATP; it reads FSGGQDSATCV. Residues cysteine 202, cysteine 217, cysteine 220, and cysteine 223 each contribute to the Zn(2+) site.

This sequence belongs to the QueC family. Zn(2+) serves as cofactor.

The catalysed reaction is 7-carboxy-7-deazaguanine + NH4(+) + ATP = 7-cyano-7-deazaguanine + ADP + phosphate + H2O + H(+). It participates in purine metabolism; 7-cyano-7-deazaguanine biosynthesis. Functionally, catalyzes the ATP-dependent conversion of 7-carboxy-7-deazaguanine (CDG) to 7-cyano-7-deazaguanine (preQ(0)). This chain is 7-cyano-7-deazaguanine synthase, found in Burkholderia cenocepacia (strain HI2424).